A 379-amino-acid polypeptide reads, in one-letter code: Putative FBD-associated F-box protein At5g38570 (379 aa).

The 47-residue stretch at 1–47 (MDNINGLPDDLLVKILSFVPTYVAVSTCVLSKRWEFLWMWLPNLEFV) folds into the F-box domain. Residues 295–345 (CWNQPSSVLECLLSSLKILNWSAYFGRPQDRDIAVYILKNACHLKTATFLT) form the FBD domain.

The sequence is that of Putative FBD-associated F-box protein At5g38570 from Arabidopsis thaliana (Mouse-ear cress).